The sequence spans 714 residues: Developmentally-regulated protein kinase 1 (714 aa).

Disordered stretches follow at residues 88–122 (NNNISNNNNNNNNNNNNNNNNNNNNNNINNNNNFN) and 174–266 (CNMI…IINN). Composition is skewed to low complexity over residues 174 to 200 (CNMINNDNNNNNNNNNNNNNNNNNNNN), 209 to 227 (PSSNSTPSHSSPSSPTTSS), and 240 to 266 (NFNQQLQNNNNSNNNSNNNNNNNIINN). In terms of domain architecture, Protein kinase spans 334–589 (FNFYGSLGSG…SCSIRNHKWF (256 aa)). Residues 340–348 (LGSGSFGTA) and K363 each bind ATP. D457 (proton acceptor) is an active-site residue. T488 is modified (phosphothreonine).

It belongs to the protein kinase superfamily. AGC Ser/Thr protein kinase family.

The catalysed reaction is L-seryl-[protein] + ATP = O-phospho-L-seryl-[protein] + ADP + H(+). It carries out the reaction L-threonyl-[protein] + ATP = O-phospho-L-threonyl-[protein] + ADP + H(+). This is Developmentally-regulated protein kinase 1 (pkaD) from Dictyostelium discoideum (Social amoeba).